The chain runs to 270 residues: Transcriptional regulator BrlR (270 aa).

A 3',3'-c-di-GMP-binding site is contributed by Met-1. In terms of domain architecture, HTH merR-type spans 1 to 71 (MLTIGQLARI…LEAIDRLKRD (71 aa)). The H-T-H motif DNA-binding region spans 4–23 (IGQLARIFEISTKTLRHYDA). 3',3'-c-di-GMP contacts are provided by Arg-31, Ser-34, Asp-35, Tyr-40, Arg-67, Arg-70, Arg-86, and Tyr-270. Residues 120 to 270 (MHARIVERPA…SQVDLYIPIY (151 aa)) form an involved in effector-binding, probably including pyocyanine-binding region.

In terms of assembly, monomer. Homodimer; dimer formation enhanced in the presence of the second messenger, cyclic di-GMP (c-di-GMP). Homotetramer; dimer of dimers, arranged in a head-to-tail fashion, which may reduce DNA-binding ability. Conformational changes upon binding c-di-GMP or pyocyanine may facilitate DNA binding.

Its function is as follows. Transcriptional regulator. Responsive to the second messenger cyclic di-GMP (c-di-GMP) and to the virulence factor pyocyanine, which both enhance gene expression and promoter DNA binding of BrlR. Activates expression of operons encoding the multidrug efflux pumps MexAB-OprM and MexEF-OprN and several ABC transport systems, acting by direct binding to their respective promoters. Also acts as a repressor of the two component regulatory system, PhoPQ. Binds to promoter of its own gene. Contributes to the antimicrobial tolerance exhibited by biofilms, acting, at least in part, by activating expression of multidrug efflux pumps and ABC transporters. The polypeptide is Transcriptional regulator BrlR (Pseudomonas aeruginosa (strain ATCC 15692 / DSM 22644 / CIP 104116 / JCM 14847 / LMG 12228 / 1C / PRS 101 / PAO1)).